An 864-amino-acid polypeptide reads, in one-letter code: Leucine--tRNA ligase (864 aa).

The short motif at P42–H52 is the 'HIGH' region element. Residues K624 to S628 carry the 'KMSKS' region motif. K627 is a binding site for ATP.

This sequence belongs to the class-I aminoacyl-tRNA synthetase family.

The protein resides in the cytoplasm. The enzyme catalyses tRNA(Leu) + L-leucine + ATP = L-leucyl-tRNA(Leu) + AMP + diphosphate. The sequence is that of Leucine--tRNA ligase from Burkholderia cenocepacia (strain ATCC BAA-245 / DSM 16553 / LMG 16656 / NCTC 13227 / J2315 / CF5610) (Burkholderia cepacia (strain J2315)).